Consider the following 498-residue polypeptide: Cytochrome P450 71B24 (498 aa).

A helical membrane pass occupies residues 1-21; sequence MSILLYFIALLSLIIIKKIKD. Cysteine 442 provides a ligand contact to heme.

Belongs to the cytochrome P450 family. The cofactor is heme.

It is found in the membrane. This is Cytochrome P450 71B24 (CYP71B24) from Arabidopsis thaliana (Mouse-ear cress).